Reading from the N-terminus, the 131-residue chain is Protein FAM107B (131 aa).

A2 carries the post-translational modification N-acetylalanine. The disordered stretch occupies residues 39–79 (MNQKRGLAPQNKPELQKVMEKRRRDQVIKQKEEEAQKKKSD). K50 carries the post-translational modification N6-acetyllysine. Residues 52–79 (ELQKVMEKRRRDQVIKQKEEEAQKKKSD) are compositionally biased toward basic and acidic residues. Residues 61–112 (RRDQVIKQKEEEAQKKKSDLEIELLKRQQKLEQLELEKQKLQEEQENAPEFV) adopt a coiled-coil conformation.

This sequence belongs to the FAM107 family. Expressed in the hippocampus and hypothalamus. Expressed in the pontine nuclei and reticulotegmental nucleus. Expressed in Purkinje cell and nuclear layers of the cerebelum. Expressed in the choroid plexus. Expressed in hippocampal granule neurons of the dente gyrus.

The sequence is that of Protein FAM107B from Mus musculus (Mouse).